Reading from the N-terminus, the 826-residue chain is MLRMTPLASAIVALLLGIEAYAAEETFDTHFMIGGMKDQQVANIRLDDNQPLPGQYDIDIYVNKQWRGKYEIIVKDNPQETCLSREVIKRLGINSDNFASGKQCLTFEQLVQGGSYTWDIGVFRLDFSVPQAWVEELESGYVPPENWERGINAFYTSYYLSQYYSDYKASGNNKSTYVRFNSGLNLLGWQLHSDASFSKTNNNPGVWKSNTLYLERGFAQLLGTLRVGDMYTSSDIFDSVRFRGVRLFRDMQMLPNSKQNFTPRVQGIAQSNALVTIEQNGFVVYQKEVPPGPFAITDLQLAGGGADLDVSVKEADGSVTTYLVPYAAVPNMLQPGVSKYDLAAGRSHIEGASKQSDFVQAGYQYGFNNLLTLYGGSMVANNYYAFTLGAGWNTRIGAISVDATKSHSKQDNGDVFDGQSYQIAYNKFVSQTSTRFGLAAWRYSSRDYRTFNDHVWANNKDNYRRDENDVYDIADYYQNDFGRKNSFSANMSQSLPEGWGSVSLSTLWRDYWGRSGSSKDYQLSYSNNLRRISYTLAASQAYDENHHEEKRFNIFISIPFDWGDDVSTPRRQIYMSNSTTFDDQGFASNNTGLSGTVGSRDQFNYGVNLSHQHQGNETTAGANLTWNAPVATVNGSYSQSSTYRQAGASVSGGIVAWSGGVNLANRLSETFAVMNAPGIKDAYVNGQKYRTTNRNGVVIYDGMTPYRENHLMLDVSQSDSEAELRGNRKIAAPYRGAVVLVNFDTDQRKPWFIKALRADGQSLTFGYEVNDIHGHNIGVVGQGSQLFIRTNEVPPSVNVAIDKQQGLSCTITFGKEIDESRNYICQ.

The N-terminal stretch at 1–22 (MLRMTPLASAIVALLLGIEAYA) is a signal peptide. The cysteines at positions 809 and 825 are disulfide-linked.

This sequence belongs to the fimbrial export usher family.

The protein localises to the cell outer membrane. In terms of biological role, part of the yehABCD fimbrial operon. Could contribute to adhesion to various surfaces in specific environmental niches. Probably involved in the export and assembly of fimbrial subunits across the outer membrane. This is Outer membrane usher protein YehB (yehB) from Escherichia coli (strain K12).